A 1273-amino-acid polypeptide reads, in one-letter code: Ribulose bisphosphate carboxylase small subunit, chloroplastic (1273 aa).

Residues 1–134 (MPFDRQPLLS…AVLPFTSEKD (134 aa)) constitute a chloroplast transit peptide. 7 consecutive propeptides follow at residues 269-278 (GMAAMTGEKD), 412-421 (GMAAMTGEKD), 556-565 (GMAAMTGEKD), 699-708 (GMAAMTGEKD), 844-853 (GMAAMTGEKE), 987-996 (GMAAMTGEKD), and 1131-1140 (GMAAMTGEKE).

The protein belongs to the RuBisCO small chain family. In terms of assembly, heterohexadecamer of 8 large and 8 small subunits. Post-translationally, eight small subunits are processed from a large polyprotein. All start with the same sequence but there is more heterogeneity at the C-terminus.

It is found in the plastid. Its subcellular location is the chloroplast. In terms of biological role, ruBisCO catalyzes two reactions: the carboxylation of D-ribulose 1,5-bisphosphate, the primary event in carbon dioxide fixation, as well as the oxidative fragmentation of the pentose substrate. Both reactions occur simultaneously and in competition at the same active site. Although the small subunit is not catalytic it is essential for maximal activity. In Euglena gracilis, this protein is Ribulose bisphosphate carboxylase small subunit, chloroplastic.